Consider the following 255-residue polypeptide: Hydroxyacylglutathione hydrolase (255 aa).

Residues H55, H57, D59, H60, H111, D131, and H169 each coordinate Zn(2+).

This sequence belongs to the metallo-beta-lactamase superfamily. Glyoxalase II family. In terms of assembly, monomer. Zn(2+) is required as a cofactor.

The enzyme catalyses an S-(2-hydroxyacyl)glutathione + H2O = a 2-hydroxy carboxylate + glutathione + H(+). It functions in the pathway secondary metabolite metabolism; methylglyoxal degradation; (R)-lactate from methylglyoxal: step 2/2. Functionally, thiolesterase that catalyzes the hydrolysis of S-D-lactoyl-glutathione to form glutathione and D-lactic acid. In Chromohalobacter salexigens (strain ATCC BAA-138 / DSM 3043 / CIP 106854 / NCIMB 13768 / 1H11), this protein is Hydroxyacylglutathione hydrolase.